A 263-amino-acid chain; its full sequence is 3-deoxy-manno-octulosonate cytidylyltransferase (263 aa).

This sequence belongs to the KdsB family.

The protein resides in the cytoplasm. The enzyme catalyses 3-deoxy-alpha-D-manno-oct-2-ulosonate + CTP = CMP-3-deoxy-beta-D-manno-octulosonate + diphosphate. Its pathway is nucleotide-sugar biosynthesis; CMP-3-deoxy-D-manno-octulosonate biosynthesis; CMP-3-deoxy-D-manno-octulosonate from 3-deoxy-D-manno-octulosonate and CTP: step 1/1. The protein operates within bacterial outer membrane biogenesis; lipopolysaccharide biosynthesis. Activates KDO (a required 8-carbon sugar) for incorporation into bacterial lipopolysaccharide in Gram-negative bacteria. The sequence is that of 3-deoxy-manno-octulosonate cytidylyltransferase from Burkholderia vietnamiensis (strain G4 / LMG 22486) (Burkholderia cepacia (strain R1808)).